The primary structure comprises 662 residues: Probable actin-related protein 8 (662 aa).

Composition is skewed to basic and acidic residues over residues 50 to 59 and 67 to 77; these read AGEKDAKETE and TKQDDSKKSQV. Residues 50–92 are disordered; sequence AGEKDAKETESESANGDTKQDDSKKSQVEEEEDGIEESELGEE. Acidic residues predominate over residues 78–89; that stretch reads EEEEDGIEESEL. 339 to 342 lines the ATP pocket; it reads DMGA.

It belongs to the actin family. As to quaternary structure, component of the chromatin remodeling Ino80 complex. Exists as monomers and dimers, but the dimer is most probably the biologically relevant form required for stable interactions with histones that exploits the twofold symmetry of the nucleosome core.

The protein resides in the nucleus. Its function is as follows. Probably involved in transcription regulation via its interaction with the INO80 complex, a chromatin remodeling complex. Exhibits low basal ATPase activity, and unable to polymerize. Strongly prefer nucleosomes and H3-H4 tetramers over H2A-H2B dimers, suggesting it may act as a nucleosome recognition module within the complex. The chain is Probable actin-related protein 8 from Schizosaccharomyces pombe (strain 972 / ATCC 24843) (Fission yeast).